The following is a 110-amino-acid chain: Snake venom vascular endothelial growth factor toxin (110 aa).

Glutamine 1 carries the pyrrolidone carboxylic acid modification. 3 disulfides stabilise this stretch: cysteine 14-cysteine 56, cysteine 45-cysteine 91, and cysteine 49-cysteine 93.

This sequence belongs to the PDGF/VEGF growth factor family. Snake venom VEGF subfamily. Homodimer; disulfide-linked. As to expression, expressed by the venom gland.

The protein resides in the secreted. Functionally, snake venom VEGFs that may contribute to venom dispersion and prey subjugation by inducing vascular permeability and hypotension. This protein potently stimulates dermal human microvascular endothelial cell (dHMVEC) proliferation in a VEGFR-2 dependent manner. This stimulatory effect is correlated with activation of the MAPK Erk1/2 signaling pathway. It also appears to be a chemoattractant for migration of these cells and stimulates their radial migration in a collagen gel. In vivo, it induces angiogenesis in a Japanese quail assay. This pro-angiogenic effect may also be related to its interaction with VEGFR-2. In addition, it may induce an increase in capillary permeability after intradermal injection, as well as a drastic hypotensive effect after intravenous injection. The hypotension is mediated by nitric oxide (NO), which is produced by VEGF-activated endothelium NO synthase. The protein is Snake venom vascular endothelial growth factor toxin of Daboia palaestinae (Palestine viper).